The chain runs to 255 residues: Hemin import ATP-binding protein HmuV (255 aa).

The 237-residue stretch at Leu-2–Asp-238 folds into the ABC transporter domain. An ATP-binding site is contributed by Gly-34 to Ser-41.

This sequence belongs to the ABC transporter superfamily. Heme (hemin) importer (TC 3.A.1.14.5) family. As to quaternary structure, the complex is composed of two ATP-binding proteins (HmuV), two transmembrane proteins (HmuU) and a solute-binding protein (HmuT).

It is found in the cell inner membrane. Part of the ABC transporter complex HmuTUV involved in hemin import. Responsible for energy coupling to the transport system. The polypeptide is Hemin import ATP-binding protein HmuV (Pseudomonas putida (strain ATCC 47054 / DSM 6125 / CFBP 8728 / NCIMB 11950 / KT2440)).